A 422-amino-acid chain; its full sequence is UDP-N-acetylglucosamine 1-carboxyvinyltransferase (422 aa).

22–23 (KN) lines the phosphoenolpyruvate pocket. A UDP-N-acetyl-alpha-D-glucosamine-binding site is contributed by arginine 92. Cysteine 116 functions as the Proton donor in the catalytic mechanism. Residue cysteine 116 is modified to 2-(S-cysteinyl)pyruvic acid O-phosphothioketal. Residues 121 to 125 (RPVDL), aspartate 307, and leucine 329 contribute to the UDP-N-acetyl-alpha-D-glucosamine site.

Belongs to the EPSP synthase family. MurA subfamily.

It localises to the cytoplasm. It catalyses the reaction phosphoenolpyruvate + UDP-N-acetyl-alpha-D-glucosamine = UDP-N-acetyl-3-O-(1-carboxyvinyl)-alpha-D-glucosamine + phosphate. It participates in cell wall biogenesis; peptidoglycan biosynthesis. Functionally, cell wall formation. Adds enolpyruvyl to UDP-N-acetylglucosamine. This is UDP-N-acetylglucosamine 1-carboxyvinyltransferase from Aliarcobacter butzleri (strain RM4018) (Arcobacter butzleri).